Consider the following 588-residue polypeptide: Zinc finger protein 599 (588 aa).

A KRAB domain is found at 9–80 (VSFEDVVVTF…KRGLSQSTCA (72 aa)). C2H2-type zinc fingers lie at residues 199-221 (YTCTECGKGFSKKWALVRHQQIH), 227-249 (YECNECGKACRYMADVIRHMRLH), 255-277 (YKCIECGKAFKRRFHLTEHQRIH), 283-305 (YECKECGKAFTHRSSFIQHNMTH), 311-333 (FLCKECGKAFYYSSSFAQHMRIH), 339-361 (YECGECGKAFTHRSTFIQHNVTH), 367-389 (FLCKECGKTFCLNSSFTQHMRIH), 395-417 (YECGECGKAFTHRSTFIRHKRTH), 423-445 (FECKECGKAFCDSSSLIQHMRIH), 451-473 (YECSECGKAFTHHSVFIRHNRTH), 479-501 (LECKECAKAFYYSSSFTRHMRIH), 507-529 (YVCRECGKAFTQPANFVRHNRIH), 535-557 (FECKECEKAFCDNFALTQHMRTH), and 563-585 (FECNECGKTFSHSSSFTHHRKIH).

Belongs to the krueppel C2H2-type zinc-finger protein family.

Its subcellular location is the nucleus. May be involved in transcriptional regulation. In Homo sapiens (Human), this protein is Zinc finger protein 599 (ZNF599).